Here is an 83-residue protein sequence, read N- to C-terminus: Salivary thrombin inhibitor anophelin (83 aa).

Positions 1–22 (MANKLVLISLLCVVLVAKITQA) are cleaved as a signal peptide. The tract at residues 25-51 (QYAPGDEPSYDEDTDDSDKLVENDTSI) is disordered. An N-linked (GlcNAc...) asparagine glycan is attached at Asn47. The interval 54–83 (EDYAAIEASLSETFNTAADPGRRLGEGSKP) is sufficient for host thrombin inhibition. Residues 56-62 (YAAIEAS) form a blocks exosite I of host thrombin region. A disordered region spans residues 64 to 83 (SETFNTAADPGRRLGEGSKP). Positions 72–75 (DPGR) are blocks active site cleft of host thrombin in a reverse direction compared to substrates. Residues 73–83 (PGRRLGEGSKP) show a composition bias toward basic and acidic residues.

The protein belongs to the anophelin family. Interacts with human F2 (thrombin); the interaction results in thrombin inhibition. In terms of tissue distribution, salivary gland (at protein level).

Its subcellular location is the secreted. Its activity is regulated as follows. Increasing concentration of NaCl decreases affinity for thrombin. In terms of biological role, salivary protein with anticoagulant activity that inhibits host thrombin (F2); binds to the proteinase in a reverse orientation (opposite to substrates). Inhibits thrombin-induced platelet aggregation. This chain is Salivary thrombin inhibitor anophelin, found in Anopheles albimanus (New world malaria mosquito).